Reading from the N-terminus, the 213-residue chain is 5-deoxy-D-ribulose 1-phosphate aldolase (213 aa).

Residues 28–29, 45–46, and 74–76 contribute to the substrate site; these read GN, SG, and SSE. Glu76 functions as the Proton donor/acceptor in the catalytic mechanism. Mn(2+) contacts are provided by Glu76, His95, His97, and His157.

This sequence belongs to the aldolase class II family. Forms homooligomers, possibly homotetramers. Mn(2+) serves as cofactor.

The enzyme catalyses 5-deoxy-D-ribulose 1-phosphate = dihydroxyacetone phosphate + acetaldehyde. The protein operates within carbohydrate degradation. Catalyzes the cleavage of 5-deoxy-D-ribulose 1-phosphate to yield dihydroxyacetone phosphate (DHAP) and acetaldehyde, as part of a 5-deoxyribose salvage pathway that recycles this toxic radical SAM enzyme by-product to mainstream metabolites. Is also able to catalyze the reverse reaction, using several aldehydes as substrate, with acetaldehyde being the preferred substrate. The chain is 5-deoxy-D-ribulose 1-phosphate aldolase from Bacillus thuringiensis serovar kurstaki (strain ATCC 35866 / NRRL B-4488 / HD73).